Reading from the N-terminus, the 248-residue chain is 3-deoxy-manno-octulosonate cytidylyltransferase (248 aa).

The protein belongs to the KdsB family.

It is found in the cytoplasm. The catalysed reaction is 3-deoxy-alpha-D-manno-oct-2-ulosonate + CTP = CMP-3-deoxy-beta-D-manno-octulosonate + diphosphate. It participates in nucleotide-sugar biosynthesis; CMP-3-deoxy-D-manno-octulosonate biosynthesis; CMP-3-deoxy-D-manno-octulosonate from 3-deoxy-D-manno-octulosonate and CTP: step 1/1. It functions in the pathway bacterial outer membrane biogenesis; lipopolysaccharide biosynthesis. Functionally, activates KDO (a required 8-carbon sugar) for incorporation into bacterial lipopolysaccharide in Gram-negative bacteria. In Citrobacter koseri (strain ATCC BAA-895 / CDC 4225-83 / SGSC4696), this protein is 3-deoxy-manno-octulosonate cytidylyltransferase.